The following is a 535-amino-acid chain: CTP synthase (535 aa).

Positions 1–267 are amidoligase domain; the sequence is MTKYIFVTGG…DQIVCDHLKL (267 aa). S13 serves as a coordination point for CTP. A UTP-binding site is contributed by S13. 14–19 is an ATP binding site; the sequence is SLGKGI. Position 54 (Y54) interacts with L-glutamine. Residue D71 coordinates ATP. 2 residues coordinate Mg(2+): D71 and E141. CTP is bound by residues 148 to 150, 188 to 193, and K224; these read DIE and KTKPTQ. Residues 188–193 and K224 contribute to the UTP site; that span reads KTKPTQ. Residue 240–242 participates in ATP binding; it reads RDA. Residues 292 to 534 enclose the Glutamine amidotransferase type-1 domain; that stretch reads KIALVGKYVE…VSASITNKES (243 aa). Residue G354 participates in L-glutamine binding. Catalysis depends on C381, which acts as the Nucleophile; for glutamine hydrolysis. Residues 382 to 385, E405, and R462 contribute to the L-glutamine site; that span reads LGMQ. Residues H507 and E509 contribute to the active site.

This sequence belongs to the CTP synthase family. Homotetramer.

The catalysed reaction is UTP + L-glutamine + ATP + H2O = CTP + L-glutamate + ADP + phosphate + 2 H(+). It catalyses the reaction L-glutamine + H2O = L-glutamate + NH4(+). The enzyme catalyses UTP + NH4(+) + ATP = CTP + ADP + phosphate + 2 H(+). The protein operates within pyrimidine metabolism; CTP biosynthesis via de novo pathway; CTP from UDP: step 2/2. Allosterically activated by GTP, when glutamine is the substrate; GTP has no effect on the reaction when ammonia is the substrate. The allosteric effector GTP functions by stabilizing the protein conformation that binds the tetrahedral intermediate(s) formed during glutamine hydrolysis. Inhibited by the product CTP, via allosteric rather than competitive inhibition. Catalyzes the ATP-dependent amination of UTP to CTP with either L-glutamine or ammonia as the source of nitrogen. Regulates intracellular CTP levels through interactions with the four ribonucleotide triphosphates. This is CTP synthase from Bacillus mycoides (strain KBAB4) (Bacillus weihenstephanensis).